The chain runs to 224 residues: tRNA (guanine-N(7)-)-methyltransferase (224 aa).

4 residues coordinate S-adenosyl-L-methionine: glutamate 54, glutamate 79, aspartate 106, and aspartate 129. The active site involves aspartate 129. Positions 133 and 165 each coordinate substrate.

Belongs to the class I-like SAM-binding methyltransferase superfamily. TrmB family.

It catalyses the reaction guanosine(46) in tRNA + S-adenosyl-L-methionine = N(7)-methylguanosine(46) in tRNA + S-adenosyl-L-homocysteine. It participates in tRNA modification; N(7)-methylguanine-tRNA biosynthesis. Its function is as follows. Catalyzes the formation of N(7)-methylguanine at position 46 (m7G46) in tRNA. The chain is tRNA (guanine-N(7)-)-methyltransferase from Chlamydia felis (strain Fe/C-56) (Chlamydophila felis).